Here is a 443-residue protein sequence, read N- to C-terminus: Xaa-Pro dipeptidase (443 aa).

Mn(2+) contacts are provided by D246, D257, H339, E384, and E423.

It belongs to the peptidase M24B family. Bacterial-type prolidase subfamily. Mn(2+) is required as a cofactor.

The catalysed reaction is Xaa-L-Pro dipeptide + H2O = an L-alpha-amino acid + L-proline. Its function is as follows. Splits dipeptides with a prolyl residue in the C-terminal position. This chain is Xaa-Pro dipeptidase, found in Citrobacter koseri (strain ATCC BAA-895 / CDC 4225-83 / SGSC4696).